The chain runs to 365 residues: Aminomethyltransferase (365 aa).

Belongs to the GcvT family. As to quaternary structure, the glycine cleavage system is composed of four proteins: P, T, L and H.

The enzyme catalyses N(6)-[(R)-S(8)-aminomethyldihydrolipoyl]-L-lysyl-[protein] + (6S)-5,6,7,8-tetrahydrofolate = N(6)-[(R)-dihydrolipoyl]-L-lysyl-[protein] + (6R)-5,10-methylene-5,6,7,8-tetrahydrofolate + NH4(+). Functionally, the glycine cleavage system catalyzes the degradation of glycine. This Chlorobaculum tepidum (strain ATCC 49652 / DSM 12025 / NBRC 103806 / TLS) (Chlorobium tepidum) protein is Aminomethyltransferase.